Consider the following 146-residue polypeptide: DNA-binding protein Rv2175c (146 aa).

The tract at residues methionine 1–glutamate 27 is disordered. Position 9 is a phosphothreonine (threonine 9).

Monomer in solution. May form homodimers. Interacts with phosphorylated PknL. Phosphorylated by PknL. Phosphorylation negatively regulates DNA-binding activity.

Functionally, binds DNA at low salt concentrations. This chain is DNA-binding protein Rv2175c, found in Mycobacterium tuberculosis (strain ATCC 25618 / H37Rv).